Consider the following 150-residue polypeptide: MAKRVSLPDVVISAPKAVFKPAKEEALACILPKYYKSMADVSIKTNSVIDKCWFCNQDLVFKPISIETFKGGEVGYFCSKICRDSLASMVKSHVALREEPKISLLPLVFYEDKEKVINTINLLRDKDGVYGSCYFKENSQIIDISLRSLL.

Belongs to the orthopoxvirus VLTF-2/OPG126 family. Interacts with itself. Interacts with the late transcription factors VLTF-1/OPG093.

Functionally, acts with RNA polymerase to initiate transcription from late gene promoters. The protein is Viral late gene transcription factor 2 (OPG126) of Vaccinia virus (strain Western Reserve) (VACV).